The sequence spans 82 residues: Acyl carrier protein (82 aa).

The 79-residue stretch at 3-81 (SSEQEILAGL…DAVTYIAGAQ (79 aa)) folds into the Carrier domain. Ser-41 bears the O-(pantetheine 4'-phosphoryl)serine mark.

It belongs to the acyl carrier protein (ACP) family. 4'-phosphopantetheine is transferred from CoA to a specific serine of apo-ACP by AcpS. This modification is essential for activity because fatty acids are bound in thioester linkage to the sulfhydryl of the prosthetic group.

It localises to the cytoplasm. Its pathway is lipid metabolism; fatty acid biosynthesis. Functionally, carrier of the growing fatty acid chain in fatty acid biosynthesis. This chain is Acyl carrier protein, found in Beutenbergia cavernae (strain ATCC BAA-8 / DSM 12333 / CCUG 43141 / JCM 11478 / NBRC 16432 / NCIMB 13614 / HKI 0122).